Reading from the N-terminus, the 1086-residue chain is Ribonuclease 3 (1086 aa).

2 disordered regions span residues 1 to 77 (MSDE…DSPR) and 158 to 233 (CHSM…LRNF). The segment covering 13–23 (PKHKRARRKKY) has biased composition (basic residues). Positions 24–35 (QKEYQERHKEEM) are enriched in basic and acidic residues. A compositionally biased stretch (polar residues) spans 43–53 (FQNQPSTSSAP). Residues 159–168 (HSMKGRKTPK) are compositionally biased toward basic residues. A compositionally biased stretch (acidic residues) spans 181-190 (VSDDSNDSQD). Polar residues predominate over residues 191–201 (EASTSEPTNRQ). A compositionally biased stretch (basic and acidic residues) spans 203 to 217 (PEADKTGEVKDEKQT). 2 RNase III domains span residues 607–781 (LDVF…LDGG) and 833–957 (FHAL…VDRG). Positions 694, 767, 770, 873, 943, and 946 each coordinate Mg(2+). The DRBM domain occupies 984–1059 (DAKSHLQQWC…AELALANLES (76 aa)).

Belongs to the ribonuclease III family. The cofactor is Mg(2+). Mn(2+) is required as a cofactor.

Its subcellular location is the nucleus. The catalysed reaction is Endonucleolytic cleavage to 5'-phosphomonoester.. Its function is as follows. Executes the initial step of microRNA (miRNA) processing in the nucleus, that is the cleavage of pri-miRNA to release pre-miRNA. Involved in pre-rRNA processing. Cleaves double-strand RNA and does not cleave single-strand RNA. Involved in fertility. Required for the function or synthesis of the let-7 miRNA. The protein is Ribonuclease 3 (drsh-1) of Caenorhabditis elegans.